Here is a 373-residue protein sequence, read N- to C-terminus: Phosphoserine aminotransferase (373 aa).

Arg46 contacts L-glutamate. Pyridoxal 5'-phosphate contacts are provided by Phe104, Thr150, Asp172, and Gln195. N6-(pyridoxal phosphate)lysine is present on Lys196. A pyridoxal 5'-phosphate-binding site is contributed by 247 to 248 (NT).

It belongs to the class-V pyridoxal-phosphate-dependent aminotransferase family. SerC subfamily. Homodimer. It depends on pyridoxal 5'-phosphate as a cofactor.

Its subcellular location is the cytoplasm. The catalysed reaction is O-phospho-L-serine + 2-oxoglutarate = 3-phosphooxypyruvate + L-glutamate. It carries out the reaction 4-(phosphooxy)-L-threonine + 2-oxoglutarate = (R)-3-hydroxy-2-oxo-4-phosphooxybutanoate + L-glutamate. Its pathway is amino-acid biosynthesis; L-serine biosynthesis; L-serine from 3-phospho-D-glycerate: step 2/3. It functions in the pathway cofactor biosynthesis; pyridoxine 5'-phosphate biosynthesis; pyridoxine 5'-phosphate from D-erythrose 4-phosphate: step 3/5. Catalyzes the reversible conversion of 3-phosphohydroxypyruvate to phosphoserine and of 3-hydroxy-2-oxo-4-phosphonooxybutanoate to phosphohydroxythreonine. The chain is Phosphoserine aminotransferase from Rhodococcus jostii (strain RHA1).